A 353-amino-acid chain; its full sequence is GTPase Obg (353 aa).

In terms of domain architecture, Obg spans 1–159; sequence MKFLDEAKVY…RWIWLRLKLI (159 aa). An OBG-type G domain is found at 160-327; that stretch reads ADAGLVGLPN…VLRALVAVIG (168 aa). Residues 166–173, 191–195, 212–215, 279–282, and 308–310 contribute to the GTP site; these read GLPNAGKS, FTTLH, DIPG, NKID, and SGV. Residues serine 173 and threonine 193 each coordinate Mg(2+).

Belongs to the TRAFAC class OBG-HflX-like GTPase superfamily. OBG GTPase family. Monomer. The cofactor is Mg(2+).

The protein localises to the cytoplasm. Its function is as follows. An essential GTPase which binds GTP, GDP and possibly (p)ppGpp with moderate affinity, with high nucleotide exchange rates and a fairly low GTP hydrolysis rate. Plays a role in control of the cell cycle, stress response, ribosome biogenesis and in those bacteria that undergo differentiation, in morphogenesis control. The polypeptide is GTPase Obg (Rhodopseudomonas palustris (strain TIE-1)).